The following is an 803-amino-acid chain: Translation initiation factor IF-2 (803 aa).

Disordered regions lie at residues 95-125 (PVVEQKRETEPAPTQEVPLTSDTTNLNEKAE) and 138-178 (EVKE…EREE). Residues 111–121 (VPLTSDTTNLN) are compositionally biased toward polar residues. Over residues 138–155 (EVKEEAKKTPSEKKETPK) the composition is skewed to basic and acidic residues. Residues 156–167 (KGPRKETRRSRK) are compositionally biased toward basic residues. Basic and acidic residues predominate over residues 168–178 (PDKEDKWEREE). One can recognise a tr-type G domain in the interval 302 to 471 (PRAPVVTIMG…LLQAEVLELK (170 aa)). The interval 311 to 318 (GHVDHGKT) is G1. GTP is bound at residue 311-318 (GHVDHGKT). Residues 336–340 (GITQH) form a G2 region. Residues 357–360 (DTPG) are G3. GTP-binding positions include 357–361 (DTPGH) and 411–414 (NKID). Residues 411–414 (NKID) are G4. The segment at 447-449 (SAK) is G5.

Belongs to the TRAFAC class translation factor GTPase superfamily. Classic translation factor GTPase family. IF-2 subfamily.

Its subcellular location is the cytoplasm. Functionally, one of the essential components for the initiation of protein synthesis. Protects formylmethionyl-tRNA from spontaneous hydrolysis and promotes its binding to the 30S ribosomal subunits. Also involved in the hydrolysis of GTP during the formation of the 70S ribosomal complex. The chain is Translation initiation factor IF-2 from Coxiella burnetii (strain CbuK_Q154) (Coxiella burnetii (strain Q154)).